The primary structure comprises 475 residues: Ribulose bisphosphate carboxylase large chain (475 aa).

Residues 1–2 constitute a propeptide that is removed on maturation; sequence MS. Pro-3 bears the N-acetylproline mark. N6,N6,N6-trimethyllysine is present on Lys-14. Substrate is bound by residues Asn-123 and Thr-173. Lys-175 acts as the Proton acceptor in catalysis. A substrate-binding site is contributed by Lys-177. The Mg(2+) site is built by Lys-201, Asp-203, and Glu-204. Position 201 is an N6-carboxylysine (Lys-201). The Proton acceptor role is filled by His-294. Residues Arg-295, His-327, and Ser-379 each coordinate substrate.

The protein belongs to the RuBisCO large chain family. Type I subfamily. As to quaternary structure, heterohexadecamer of 8 large chains and 8 small chains; disulfide-linked. The disulfide link is formed within the large subunit homodimers. Mg(2+) is required as a cofactor. In terms of processing, the disulfide bond which can form in the large chain dimeric partners within the hexadecamer appears to be associated with oxidative stress and protein turnover.

It localises to the plastid. The protein localises to the chloroplast. The enzyme catalyses 2 (2R)-3-phosphoglycerate + 2 H(+) = D-ribulose 1,5-bisphosphate + CO2 + H2O. The catalysed reaction is D-ribulose 1,5-bisphosphate + O2 = 2-phosphoglycolate + (2R)-3-phosphoglycerate + 2 H(+). Its function is as follows. RuBisCO catalyzes two reactions: the carboxylation of D-ribulose 1,5-bisphosphate, the primary event in carbon dioxide fixation, as well as the oxidative fragmentation of the pentose substrate in the photorespiration process. Both reactions occur simultaneously and in competition at the same active site. In Pinus pinea (Italian stone pine), this protein is Ribulose bisphosphate carboxylase large chain.